A 473-amino-acid chain; its full sequence is MEPFMGKNFLLKNETAVSLYHNYAKDMPIIDYHCHLSPKEIYENKTFQNITEAWLYGDHYKWRIMRANGIEETYITGDAPDEEKFMAWAKTVPMAIGNPLYNWTHLELQRFFGIYEILNEKSGSAIWKQTNKLLKGEGFGARDLIVKSNVKVVCTTDDPVDSLEYHLLLKEDKDFPVSVLPGFRPDKGLEINREGFPEWVQALEDAAAISITTYDEFLKALEKRVRFFHSAGGRVSDHAIDTMVFAETTKEEAGRIFSDRLQGTEVSCEDEKKFKTYTLQFLCGLYAELDWAMQFHINALRNTNTKMMKRLGPDTGYDSMNDEEIAKPLYKLLNSVEMKNQLPKTILYSLNPNDNYVIASMINSFQDGITPGKIQFGTAWWFNDTKDGMLDQMKALSNVGLFSRFIGMLTDSRSFLSYTRHEYFRRIVCNLIGEWVENGEVPRDMELLGSIVQGICYDNAKHYFQFQEEKANV.

Belongs to the metallo-dependent hydrolases superfamily. Uronate isomerase family.

The enzyme catalyses D-glucuronate = D-fructuronate. The catalysed reaction is aldehydo-D-galacturonate = keto-D-tagaturonate. It participates in carbohydrate metabolism; pentose and glucuronate interconversion. This is Uronate isomerase (uxaC) from Bacillus subtilis (strain 168).